The following is a 150-amino-acid chain: Large ribosomal subunit protein uL15 (150 aa).

The span at 1–15 (MNLSNLQPAEGSTHN) shows a compositional bias: polar residues. Positions 1–52 (MNLSNLQPAEGSTHNQNKRLGRGEGSGKGGTSARGHKGAKSRSGYSKKIGFE) are disordered. The segment covering 23-32 (GEGSGKGGTS) has biased composition (gly residues).

This sequence belongs to the universal ribosomal protein uL15 family. As to quaternary structure, part of the 50S ribosomal subunit.

Functionally, binds to the 23S rRNA. The chain is Large ribosomal subunit protein uL15 from Flavobacterium psychrophilum (strain ATCC 49511 / DSM 21280 / CIP 103535 / JIP02/86).